A 752-amino-acid polypeptide reads, in one-letter code: Translation initiation factor IF-2 (752 aa).

The interval 26-167 (RQGMGVKSHM…QPTQRKDKPL (142 aa)) is disordered. Residues 34-47 (HMSSVTPDQAQQLR) show a composition bias toward polar residues. The span at 72–81 (KQNNHQAQNH) shows a compositional bias: low complexity. Positions 83-96 (QHHDHDKTQNERPQ) are enriched in basic and acidic residues. A compositionally biased stretch (polar residues) spans 101 to 129 (SRSNNGTKDNNQHQNNGGRFGGSLNNDQG). Basic residues predominate over residues 131-150 (NGKRFNKKNKKNKKHNKNKR). A compositionally biased stretch (basic and acidic residues) spans 151–167 (LREVAHKQPTQRKDKPL). In terms of domain architecture, tr-type G spans 253–422 (TRPAVVTVMG…LLQAEMLELK (170 aa)). Residues 262–269 (GHVDHGKT) form a G1 region. 262 to 269 (GHVDHGKT) is a GTP binding site. Positions 287-291 (GITQE) are G2. The tract at residues 308 to 311 (DTPG) is G3. Residues 308–312 (DTPGH) and 362–365 (NKID) contribute to the GTP site. The G4 stretch occupies residues 362 to 365 (NKID). The G5 stretch occupies residues 398 to 400 (SAK).

It belongs to the TRAFAC class translation factor GTPase superfamily. Classic translation factor GTPase family. IF-2 subfamily.

The protein resides in the cytoplasm. In terms of biological role, one of the essential components for the initiation of protein synthesis. Protects formylmethionyl-tRNA from spontaneous hydrolysis and promotes its binding to the 30S ribosomal subunits. Also involved in the hydrolysis of GTP during the formation of the 70S ribosomal complex. In Limosilactobacillus reuteri (strain DSM 20016) (Lactobacillus reuteri), this protein is Translation initiation factor IF-2.